A 179-amino-acid polypeptide reads, in one-letter code: Large ribosomal subunit protein uL5 (179 aa).

This sequence belongs to the universal ribosomal protein uL5 family. Part of the 50S ribosomal subunit; part of the 5S rRNA/L5/L18/L25 subcomplex. Contacts the 5S rRNA and the P site tRNA. Forms a bridge to the 30S subunit in the 70S ribosome.

Functionally, this is one of the proteins that bind and probably mediate the attachment of the 5S RNA into the large ribosomal subunit, where it forms part of the central protuberance. In the 70S ribosome it contacts protein S13 of the 30S subunit (bridge B1b), connecting the 2 subunits; this bridge is implicated in subunit movement. Contacts the P site tRNA; the 5S rRNA and some of its associated proteins might help stabilize positioning of ribosome-bound tRNAs. This Glaesserella parasuis serovar 5 (strain SH0165) (Haemophilus parasuis) protein is Large ribosomal subunit protein uL5.